A 264-amino-acid chain; its full sequence is Sulfur carrier protein FdhD (264 aa).

Cys107 serves as the catalytic Cysteine persulfide intermediate.

The protein belongs to the FdhD family.

The protein resides in the cytoplasm. Functionally, required for formate dehydrogenase (FDH) activity. Acts as a sulfur carrier protein that transfers sulfur from IscS to the molybdenum cofactor prior to its insertion into FDH. This Staphylococcus haemolyticus (strain JCSC1435) protein is Sulfur carrier protein FdhD.